We begin with the raw amino-acid sequence, 529 residues long: Lysophosphatidylcholine acyltransferase 2 (529 aa).

The Cytoplasmic portion of the chain corresponds to 1-50 (MPPPHRVFALPRQQSLLLPAVINPFVHDLSLSTADITKCFLLGIILVPLR). Residues 51-71 (AIFLLLVLLVMWPVSVIITFG) form a helical; Signal-anchor for type II membrane protein membrane-spanning segment. Residues 72–529 (QSLKGVVEPM…EDSASDKKDD (458 aa)) lie on the Lumenal side of the membrane. Residues 128–133 (HSSFFD) carry the HXXXXD motif motif. Residues 202 to 205 (EGTC) carry the EGTC motif motif. N207 is a glycosylation site (N-linked (GlcNAc...) asparagine). 3 EF-hand domains span residues 373-408 (PISPALQQLFALFDRNGDGTIDFREYVIGVTVLCRP), 410-445 (NNEEVIQTAFKLFDIDEDNCITQEEFSSLLRSALGV), and 449-480 (DVHSLFREIDADGSGHITYDEFRSFALNHPEY). D386, N388, D390, T392, E397, D423, D425, D427, C429, E434, D458, D460, S462, H464, and E469 together coordinate Ca(2+).

The protein belongs to the 1-acyl-sn-glycerol-3-phosphate acyltransferase family.

It localises to the endoplasmic reticulum membrane. The protein resides in the golgi apparatus membrane. The protein localises to the cell membrane. It is found in the lipid droplet. The enzyme catalyses a 1-acyl-sn-glycero-3-phosphocholine + an acyl-CoA = a 1,2-diacyl-sn-glycero-3-phosphocholine + CoA. It carries out the reaction a 1-O-alkyl-sn-glycero-3-phosphocholine + acetyl-CoA = a 1-O-alkyl-2-acetyl-sn-glycero-3-phosphocholine + CoA. It catalyses the reaction a 1-acyl-sn-glycero-3-phosphate + an acyl-CoA = a 1,2-diacyl-sn-glycero-3-phosphate + CoA. The catalysed reaction is a 1-O-(1Z-alkenyl)-sn-glycero-3-phosphocholine + an acyl-CoA = a 1-O-(1Z-alkenyl)-2-acyl-sn-glycero-3-phosphocholine + CoA. The enzyme catalyses 1-hexadecanoyl-sn-glycero-3-phosphate + (9Z)-octadecenoyl-CoA = 1-hexadecanoyl-2-(9Z-octadecenoyl)-sn-glycero-3-phosphate + CoA. It carries out the reaction 1-(9Z-octadecenoyl)-sn-glycero-3-phosphate + (9Z)-octadecenoyl-CoA = 1,2-di-(9Z-octadecenoyl)-sn-glycero-3-phosphate + CoA. It catalyses the reaction 1-(9Z-octadecenoyl)-sn-glycero-3-phosphate + hexadecanoyl-CoA = 1-(9Z)-octadecenoyl-2-hexadecanoyl-sn-glycero-3-phosphate + CoA. The catalysed reaction is 1-heptadecanoyl-sn-glycero-3-phosphate + (9Z)-octadecenoyl-CoA = 1-heptadecanoyl-2-(9Z)-octadecenoyl-sn-glycero-3-phosphate + CoA. The enzyme catalyses 1-octadecanoyl-sn-glycero-3-phosphate + (9Z)-octadecenoyl-CoA = 1-octadecanoyl-2-(9Z-octadecenoyl)-sn-glycero-3-phosphate + CoA. It carries out the reaction heptadecanoyl-CoA + 1-(9Z-octadecenoyl)-sn-glycero-3-phosphate = 1-(9Z)-octadecenoyl-2-heptadecanoyl-sn-glycero-3-phosphate + CoA. It catalyses the reaction 1-(9Z-octadecenoyl)-sn-glycero-3-phosphate + (9Z,12Z)-octadecadienoyl-CoA = 1-(9Z)-octadecenoyl-2-(9Z,12Z)-octadecadienoyl-sn-glycero-3-phosphate + CoA. The catalysed reaction is 1-(9Z-octadecenoyl)-sn-glycero-3-phosphate + tetradecanoyl-CoA = 1-(9Z)-octadecenoyl-2-tetradecanoyl-sn-glycero-3-phosphate + CoA. The enzyme catalyses pentadecanoyl-CoA + 1-(9Z-octadecenoyl)-sn-glycero-3-phosphate = 1-(9Z)-octadecenoyl-2-pentadecanoyl-sn-glycero-3-phosphate + CoA. It carries out the reaction nonadecanoyl-CoA + 1-(9Z-octadecenoyl)-sn-glycero-3-phosphate = 1-(9Z)-octadecenoyl-2-nonadecanoyl-sn-glycero-3-phosphate + CoA. It catalyses the reaction 1-hexadecanoyl-sn-glycero-3-phosphocholine + (9Z)-octadecenoyl-CoA = 1-hexadecanoyl-2-(9Z-octadecenoyl)-sn-glycero-3-phosphocholine + CoA. The catalysed reaction is 1-O-hexadecyl-sn-glycero-3-phosphocholine + acetyl-CoA = 1-O-hexadecyl-2-acetyl-sn-glycero-3-phosphocholine + CoA. The enzyme catalyses 1-O-octadecyl-sn-glycero-3-phosphocholine + acetyl-CoA = 1-O-octadecyl-2-acetyl-sn-glycero-3-phosphocholine + CoA. It carries out the reaction 1-hexadecanoyl-sn-glycero-3-phosphocholine + acetyl-CoA = 1-hexadecanoyl-2-acetyl-sn-glycero-3-phosphocholine + CoA. It catalyses the reaction 1-octadecanoyl-sn-glycero-3-phosphocholine + acetyl-CoA = 1-octadecanoyl-2-acetyl-sn-glycero-3-phosphocholine + CoA. The catalysed reaction is a 1-O-(1Z-alkenyl)-sn-glycero-3-phosphocholine + acetyl-CoA = 1-O-(1Z)-alkenyl-2-acetyl-sn-glycero-3-phosphocholine + CoA. The enzyme catalyses 1-O-octadecyl-sn-glycero-3-phosphocholine + (5Z,8Z,11Z,14Z)-eicosatetraenoyl-CoA = 1-O-octadecyl-2-(5Z,8Z,11Z,14Z)-eicosatetraenoyl-sn-glycero-3-phosphocholine + CoA. It functions in the pathway lipid metabolism; phospholipid metabolism. In terms of biological role, exhibits both acyltransferase and acetyltransferase activities. Activity is calcium-dependent. Catalyzes the conversion of lysophosphatidylcholine (1-acyl-sn-glycero-3-phosphocholine or LPC) into phosphatidylcholine (1,2-diacyl-sn-glycero-3-phosphocholine or PC). Catalyzes the conversion 1-acyl-sn-glycerol-3-phosphate (lysophosphatidic acid or LPA) into 1,2-diacyl-sn-glycerol-3-phosphate (phosphatidic acid or PA) by incorporating an acyl moiety at the sn-2 position of the glycerol backbone. Involved in platelet-activating factor (PAF) biosynthesis by catalyzing the conversion of the PAF precursor, 1-O-alkyl-sn-glycero-3-phosphocholine (lyso-PAF) into 1-O-alkyl-2-acetyl-sn-glycero-3-phosphocholine (PAF). This is Lysophosphatidylcholine acyltransferase 2 (lpcat2) from Danio rerio (Zebrafish).